The chain runs to 142 residues: Transcription antitermination protein NusB (142 aa).

It belongs to the NusB family.

Involved in transcription antitermination. Required for transcription of ribosomal RNA (rRNA) genes. Binds specifically to the boxA antiterminator sequence of the ribosomal RNA (rrn) operons. The sequence is that of Transcription antitermination protein NusB from Buchnera aphidicola subsp. Cinara cedri (strain Cc).